A 311-amino-acid chain; its full sequence is Formimidoylglutamase (311 aa).

Residues histidine 122, aspartate 151, histidine 153, aspartate 155, cysteine 242, and aspartate 244 each coordinate Mn(2+).

It belongs to the arginase family. Homodimer. Mn(2+) serves as cofactor.

It catalyses the reaction N-formimidoyl-L-glutamate + H2O = formamide + L-glutamate. It functions in the pathway amino-acid degradation; L-histidine degradation into L-glutamate; L-glutamate from N-formimidoyl-L-glutamate (hydrolase route): step 1/1. In terms of biological role, catalyzes the conversion of N-formimidoyl-L-glutamate to L-glutamate and formamide. The protein is Formimidoylglutamase of Pseudomonas aeruginosa (strain ATCC 15692 / DSM 22644 / CIP 104116 / JCM 14847 / LMG 12228 / 1C / PRS 101 / PAO1).